The following is a 609-amino-acid chain: Arginine--tRNA ligase (609 aa).

The short motif at 132 to 142 (ANPTSSLHVGH) is the 'HIGH' region element.

It belongs to the class-I aminoacyl-tRNA synthetase family. In terms of assembly, monomer.

The protein localises to the cytoplasm. It catalyses the reaction tRNA(Arg) + L-arginine + ATP = L-arginyl-tRNA(Arg) + AMP + diphosphate. This is Arginine--tRNA ligase from Psychrobacter arcticus (strain DSM 17307 / VKM B-2377 / 273-4).